Here is a 166-residue protein sequence, read N- to C-terminus: UPF0304 protein VV1_2093 (166 aa).

Belongs to the UPF0304 family.

In Vibrio vulnificus (strain CMCP6), this protein is UPF0304 protein VV1_2093.